The primary structure comprises 297 residues: N-acetylmuramic acid 6-phosphate etherase (297 aa).

The region spanning 55-218 (AAAALKSGGR…STGAMVKFGK (164 aa)) is the SIS domain. E83 (proton donor) is an active-site residue. The active site involves E114.

This sequence belongs to the GCKR-like family. MurNAc-6-P etherase subfamily. As to quaternary structure, homodimer.

The catalysed reaction is N-acetyl-D-muramate 6-phosphate + H2O = N-acetyl-D-glucosamine 6-phosphate + (R)-lactate. The protein operates within amino-sugar metabolism; 1,6-anhydro-N-acetylmuramate degradation. It functions in the pathway amino-sugar metabolism; N-acetylmuramate degradation. It participates in cell wall biogenesis; peptidoglycan recycling. Its function is as follows. Specifically catalyzes the cleavage of the D-lactyl ether substituent of MurNAc 6-phosphate, producing GlcNAc 6-phosphate and D-lactate. Together with AnmK, is also required for the utilization of anhydro-N-acetylmuramic acid (anhMurNAc) either imported from the medium or derived from its own cell wall murein, and thus plays a role in cell wall recycling. This chain is N-acetylmuramic acid 6-phosphate etherase, found in Salmonella schwarzengrund (strain CVM19633).